The sequence spans 162 residues: Photosystem II extrinsic protein V (162 aa).

An N-terminal signal peptide occupies residues 1–25 (MLKRCLWLVVTVLFAWQVFNGTAIA). Residues C62, C65, H66, and H117 each coordinate heme c.

Belongs to the cytochrome c family. PsbV subfamily. In terms of assembly, PSII is composed of 1 copy each of membrane proteins PsbA, PsbB, PsbC, PsbD, PsbE, PsbF, PsbH, PsbI, PsbJ, PsbK, PsbL, PsbM, PsbT, PsbX, PsbY, PsbZ, Psb30/Ycf12, peripheral proteins PsbO, CyanoQ (PsbQ), PsbU, PsbV and a large number of cofactors. It forms dimeric complexes. Heme c serves as cofactor.

The protein resides in the cellular thylakoid membrane. In terms of biological role, one of the extrinsic, lumenal subunits of photosystem II (PSII). PSII is a light-driven water plastoquinone oxidoreductase, using light energy to abstract electrons from H(2)O, generating a proton gradient subsequently used for ATP formation. The extrinsic proteins stabilize the structure of photosystem II oxygen-evolving complex (OEC), the ion environment of oxygen evolution and protect the OEC against heat-induced inactivation. Low-potential cytochrome c that plays a role in the OEC of PSII. The sequence is that of Photosystem II extrinsic protein V from Cyanothece sp. (strain PCC 7425 / ATCC 29141).